A 521-amino-acid polypeptide reads, in one-letter code: Bifunctional purine biosynthesis protein PurH (521 aa).

Residues 1-147 enclose the MGS-like domain; it reads MGEITRALIS…KNWEGVTVLV (147 aa).

Belongs to the PurH family.

The catalysed reaction is (6R)-10-formyltetrahydrofolate + 5-amino-1-(5-phospho-beta-D-ribosyl)imidazole-4-carboxamide = 5-formamido-1-(5-phospho-D-ribosyl)imidazole-4-carboxamide + (6S)-5,6,7,8-tetrahydrofolate. The enzyme catalyses IMP + H2O = 5-formamido-1-(5-phospho-D-ribosyl)imidazole-4-carboxamide. Its pathway is purine metabolism; IMP biosynthesis via de novo pathway; 5-formamido-1-(5-phospho-D-ribosyl)imidazole-4-carboxamide from 5-amino-1-(5-phospho-D-ribosyl)imidazole-4-carboxamide (10-formyl THF route): step 1/1. It participates in purine metabolism; IMP biosynthesis via de novo pathway; IMP from 5-formamido-1-(5-phospho-D-ribosyl)imidazole-4-carboxamide: step 1/1. The sequence is that of Bifunctional purine biosynthesis protein PurH from Acidithiobacillus ferrooxidans (strain ATCC 53993 / BNL-5-31) (Leptospirillum ferrooxidans (ATCC 53993)).